Consider the following 399-residue polypeptide: Probable dual-specificity RNA methyltransferase RlmN (399 aa).

The active-site Proton acceptor is glutamate 102. A Radical SAM core domain is found at 108–385; it reads YLDRATVCVS…CTVRVERGVA (278 aa). Cysteine 115 and cysteine 390 are disulfide-bonded. Residues cysteine 122, cysteine 126, and cysteine 129 each contribute to the [4Fe-4S] cluster site. Residues 207 to 208, serine 239, 262 to 264, and asparagine 347 contribute to the S-adenosyl-L-methionine site; these read GE and SLH. Residue cysteine 390 is the S-methylcysteine intermediate of the active site.

Belongs to the radical SAM superfamily. RlmN family. It depends on [4Fe-4S] cluster as a cofactor.

Its subcellular location is the cytoplasm. It catalyses the reaction adenosine(2503) in 23S rRNA + 2 reduced [2Fe-2S]-[ferredoxin] + 2 S-adenosyl-L-methionine = 2-methyladenosine(2503) in 23S rRNA + 5'-deoxyadenosine + L-methionine + 2 oxidized [2Fe-2S]-[ferredoxin] + S-adenosyl-L-homocysteine. The enzyme catalyses adenosine(37) in tRNA + 2 reduced [2Fe-2S]-[ferredoxin] + 2 S-adenosyl-L-methionine = 2-methyladenosine(37) in tRNA + 5'-deoxyadenosine + L-methionine + 2 oxidized [2Fe-2S]-[ferredoxin] + S-adenosyl-L-homocysteine. Specifically methylates position 2 of adenine 2503 in 23S rRNA and position 2 of adenine 37 in tRNAs. This Roseiflexus castenholzii (strain DSM 13941 / HLO8) protein is Probable dual-specificity RNA methyltransferase RlmN.